A 204-amino-acid polypeptide reads, in one-letter code: ATP phosphoribosyltransferase (204 aa).

Belongs to the ATP phosphoribosyltransferase family. Short subfamily. In terms of assembly, heteromultimer composed of HisG and HisZ subunits.

It is found in the cytoplasm. The catalysed reaction is 1-(5-phospho-beta-D-ribosyl)-ATP + diphosphate = 5-phospho-alpha-D-ribose 1-diphosphate + ATP. The protein operates within amino-acid biosynthesis; L-histidine biosynthesis; L-histidine from 5-phospho-alpha-D-ribose 1-diphosphate: step 1/9. Functionally, catalyzes the condensation of ATP and 5-phosphoribose 1-diphosphate to form N'-(5'-phosphoribosyl)-ATP (PR-ATP). Has a crucial role in the pathway because the rate of histidine biosynthesis seems to be controlled primarily by regulation of HisG enzymatic activity. The sequence is that of ATP phosphoribosyltransferase from Staphylococcus epidermidis (strain ATCC 35984 / DSM 28319 / BCRC 17069 / CCUG 31568 / BM 3577 / RP62A).